A 360-amino-acid polypeptide reads, in one-letter code: Photosystem II protein D1 3 (360 aa).

The next 3 helical transmembrane spans lie at 29–46 (YVGW…TATI), 118–133 (HFLL…QWEL), and 142–156 (WICV…AAFA). His-118 is a chlorophyll a binding site. A pheophytin a-binding site is contributed by Tyr-126. Positions 170 and 189 each coordinate [CaMn4O5] cluster. A helical membrane pass occupies residues 197–218 (FHMLGVAGVFGGSLFSAMHGSL). A chlorophyll a-binding site is contributed by His-198. A quinone contacts are provided by residues His-215 and 264-265 (SF). His-215 serves as a coordination point for Fe cation. His-272 contacts Fe cation. Residues 274-288 (FLGAWPVVGIWFTSM) traverse the membrane as a helical segment. Residues His-332, Glu-333, Asp-342, and Ala-344 each coordinate [CaMn4O5] cluster. Positions 345 to 360 (AGEATPVALTAPSIHG) are excised as a propeptide.

Belongs to the reaction center PufL/M/PsbA/D family. PSII is composed of 1 copy each of membrane proteins PsbA, PsbB, PsbC, PsbD, PsbE, PsbF, PsbH, PsbI, PsbJ, PsbK, PsbL, PsbM, PsbT, PsbX, PsbY, PsbZ, Psb30/Ycf12, peripheral proteins PsbO, CyanoQ (PsbQ), PsbU, PsbV and a large number of cofactors. It forms dimeric complexes. The D1/D2 heterodimer binds P680, chlorophylls that are the primary electron donor of PSII, and subsequent electron acceptors. It shares a non-heme iron and each subunit binds pheophytin, quinone, additional chlorophylls, carotenoids and lipids. D1 provides most of the ligands for the Mn4-Ca-O5 cluster of the oxygen-evolving complex (OEC). There is also a Cl(-1) ion associated with D1 and D2, which is required for oxygen evolution. The PSII complex binds additional chlorophylls, carotenoids and specific lipids. is required as a cofactor. Tyr-161 forms a radical intermediate that is referred to as redox-active TyrZ, YZ or Y-Z. In terms of processing, C-terminally processed by CtpA; processing is essential to allow assembly of the oxygen-evolving complex and thus photosynthetic growth.

The protein localises to the cellular thylakoid membrane. The enzyme catalyses 2 a plastoquinone + 4 hnu + 2 H2O = 2 a plastoquinol + O2. Photosystem II (PSII) is a light-driven water:plastoquinone oxidoreductase that uses light energy to abstract electrons from H(2)O, generating O(2) and a proton gradient subsequently used for ATP formation. It consists of a core antenna complex that captures photons, and an electron transfer chain that converts photonic excitation into a charge separation. The D1/D2 (PsbA/PsbD) reaction center heterodimer binds P680, the primary electron donor of PSII as well as several subsequent electron acceptors. In Synechococcus sp. (strain ATCC 27144 / PCC 6301 / SAUG 1402/1) (Anacystis nidulans), this protein is Photosystem II protein D1 3.